The primary structure comprises 59 residues: Cecropin-A2 (59 aa).

Residues 1–23 (MNFNKLFAIVLLAALVLLGQTEA) form the signal peptide.

This sequence belongs to the cecropin family.

It is found in the secreted. In terms of biological role, cecropins have lytic and antibacterial activity against several Gram-positive and Gram-negative bacteria. The chain is Cecropin-A2 (CECA2) from Aedes albopictus (Asian tiger mosquito).